The following is a 464-amino-acid chain: Asparagine--tRNA ligase (464 aa).

It belongs to the class-II aminoacyl-tRNA synthetase family. As to quaternary structure, homodimer.

The protein localises to the cytoplasm. The catalysed reaction is tRNA(Asn) + L-asparagine + ATP = L-asparaginyl-tRNA(Asn) + AMP + diphosphate + H(+). The protein is Asparagine--tRNA ligase of Acetivibrio thermocellus (strain ATCC 27405 / DSM 1237 / JCM 9322 / NBRC 103400 / NCIMB 10682 / NRRL B-4536 / VPI 7372) (Clostridium thermocellum).